Reading from the N-terminus, the 286-residue chain is Phosphatidylglycerol--prolipoprotein diacylglyceryl transferase (286 aa).

The next 7 helical transmembrane spans lie at 29–49, 66–86, 101–121, 130–150, 181–201, 209–229, and 250–270; these read IHWYGLMYLFGFILCWAVGTY, LVFYVAMGVVLGGRCGYVFFY, VWEGGMSFHGGLLGVILAMML, FLDLMDFVAPLVPIGLGLGRI, PSQLYQAALEGLVLFAVLFWF, AAVASLFLILYGCFRFAVEFV, and LSLPMIIIGALIFFYAYRHPA. Arginine 149 contacts a 1,2-diacyl-sn-glycero-3-phospho-(1'-sn-glycerol).

The protein belongs to the Lgt family.

Its subcellular location is the cell inner membrane. The enzyme catalyses L-cysteinyl-[prolipoprotein] + a 1,2-diacyl-sn-glycero-3-phospho-(1'-sn-glycerol) = an S-1,2-diacyl-sn-glyceryl-L-cysteinyl-[prolipoprotein] + sn-glycerol 1-phosphate + H(+). The protein operates within protein modification; lipoprotein biosynthesis (diacylglyceryl transfer). Functionally, catalyzes the transfer of the diacylglyceryl group from phosphatidylglycerol to the sulfhydryl group of the N-terminal cysteine of a prolipoprotein, the first step in the formation of mature lipoproteins. This Teredinibacter turnerae (strain ATCC 39867 / T7901) protein is Phosphatidylglycerol--prolipoprotein diacylglyceryl transferase.